Consider the following 229-residue polypeptide: ATP synthase subunit a (229 aa).

A run of 6 helical transmembrane segments spans residues 25–45 (ADAI…SILA), 82–102 (FFPL…IGLI), 111–131 (NINT…IVGI), 142–162 (FLGP…IGHF), 181–201 (LVLM…MMLM), and 202–222 (GVLV…IYIQ).

Belongs to the ATPase A chain family. In terms of assembly, F-type ATPases have 2 components, CF(1) - the catalytic core - and CF(0) - the membrane proton channel. CF(1) has five subunits: alpha(3), beta(3), gamma(1), delta(1), epsilon(1). CF(0) has three main subunits: a(1), b(2) and c(9-12). The alpha and beta chains form an alternating ring which encloses part of the gamma chain. CF(1) is attached to CF(0) by a central stalk formed by the gamma and epsilon chains, while a peripheral stalk is formed by the delta and b chains.

The protein resides in the cell inner membrane. Key component of the proton channel; it plays a direct role in the translocation of protons across the membrane. This is ATP synthase subunit a from Geotalea daltonii (strain DSM 22248 / JCM 15807 / FRC-32) (Geobacter daltonii).